Consider the following 166-residue polypeptide: Ribosome biogenesis regulatory protein homolog (166 aa).

Residues S34 and S64 each carry the phosphoserine modification. Positions 144-166 (KEKKLTSKQVRNTSKKIKRSRRH) are disordered. Residues 156-166 (TSKKIKRSRRH) are compositionally biased toward basic residues.

It belongs to the RRS1 family. Component of a hexameric 5S RNP precursor complex, composed of 5S RNA, rrs1, rpf2, rpl5a/rpl5b, rpl11a/rpl11b and syo1; this complex acts as a precursor for ribosome assembly. Interacts with sad1.

Its subcellular location is the nucleus. It is found in the nucleolus. Its function is as follows. Involved in ribosomal large subunit assembly. The sequence is that of Ribosome biogenesis regulatory protein homolog from Schizosaccharomyces pombe (strain 972 / ATCC 24843) (Fission yeast).